We begin with the raw amino-acid sequence, 74 residues long: Transcription attenuation protein MtrB (74 aa).

This sequence belongs to the MtrB family. Oligomer of 11 identical subunits arranged in doughnut-like structure.

Functionally, required for transcription attenuation control in the Trp operon. This trans-acting factor seems to recognize a 10 bases nucleotide sequence in the Trp leader transcript causing transcription termination. Binds the leader RNA only in presence of L-tryptophan. The sequence is that of Transcription attenuation protein MtrB from Geobacillus sp. (strain WCH70).